The following is a 274-amino-acid chain: NH(3)-dependent NAD(+) synthetase (274 aa).

46 to 53 (GISGGQDS) lines the ATP pocket. D52 is a binding site for Mg(2+). R140 contacts deamido-NAD(+). Residue T160 participates in ATP binding. E165 provides a ligand contact to Mg(2+). Residues K173 and D180 each contribute to the deamido-NAD(+) site. ATP-binding residues include K189 and T211. 260 to 261 (HK) is a binding site for deamido-NAD(+).

Belongs to the NAD synthetase family. Homodimer.

It catalyses the reaction deamido-NAD(+) + NH4(+) + ATP = AMP + diphosphate + NAD(+) + H(+). Its pathway is cofactor biosynthesis; NAD(+) biosynthesis; NAD(+) from deamido-NAD(+) (ammonia route): step 1/1. Functionally, catalyzes the ATP-dependent amidation of deamido-NAD to form NAD. Uses ammonia as a nitrogen source. In Rhodococcus erythropolis (strain PR4 / NBRC 100887), this protein is NH(3)-dependent NAD(+) synthetase.